Reading from the N-terminus, the 104-residue chain is Large ribosomal subunit protein uL24 (104 aa).

The protein belongs to the universal ribosomal protein uL24 family. As to quaternary structure, part of the 50S ribosomal subunit.

Functionally, one of two assembly initiator proteins, it binds directly to the 5'-end of the 23S rRNA, where it nucleates assembly of the 50S subunit. One of the proteins that surrounds the polypeptide exit tunnel on the outside of the subunit. The polypeptide is Large ribosomal subunit protein uL24 (Dichelobacter nodosus (strain VCS1703A)).